The sequence spans 232 residues: MSVHINAEKGQIADTVLLPGDPLRAKFIAETYLENVECYNEVRGMYGFTGTYNGKKVSVQGTGMGVPSISIYVNELIQSYDVQNLIRVGSCGAIRNDVKVRDVILAMTSSTDSQMNRVAFGSVDYAPCADFELLNKAYQEAQKNNLPVAVGSVFTADQFYNEDSQIEKLARYGVLGVEMETTALYTLAAKYGKKALSILTVSDHVLTGEETTAEERQTTFHDMIKLALHTVS.

Position 4 (histidine 4) interacts with a purine D-ribonucleoside. Phosphate-binding positions include glycine 20, arginine 24, arginine 43, and 87-90 (RVGS). A purine D-ribonucleoside is bound by residues glutamate 162, 178 to 180 (EME), and 202 to 203 (SD). Aspartate 203 (proton donor) is an active-site residue.

Belongs to the PNP/UDP phosphorylase family. In terms of assembly, homohexamer; trimer of homodimers.

The catalysed reaction is a purine D-ribonucleoside + phosphate = a purine nucleobase + alpha-D-ribose 1-phosphate. It catalyses the reaction a purine 2'-deoxy-D-ribonucleoside + phosphate = a purine nucleobase + 2-deoxy-alpha-D-ribose 1-phosphate. Functionally, catalyzes the reversible phosphorolytic breakdown of the N-glycosidic bond in the beta-(deoxy)ribonucleoside molecules, with the formation of the corresponding free purine bases and pentose-1-phosphate. In Bacillus velezensis (strain DSM 23117 / BGSC 10A6 / LMG 26770 / FZB42) (Bacillus amyloliquefaciens subsp. plantarum), this protein is Purine nucleoside phosphorylase DeoD-type.